Here is a 174-residue protein sequence, read N- to C-terminus: Putative serine protease 46 (174 aa).

In terms of domain architecture, Peptidase S1 spans 43–174 (VVKGKLVEVG…IGWGTTGKKG (132 aa)). A disulfide bond links Cys68 and Cys84. Catalysis depends on charge relay system residues His83 and Asp128.

The protein belongs to the peptidase S1 family.

The protein is Putative serine protease 46 of Homo sapiens (Human).